The chain runs to 430 residues: Nitroalkane oxidase (430 aa).

Residues 132-135 (LVFS), 140-142 (VAN), 170-172 (WAT), R301, Q311, 372-376 (NAVGI), and 397-401 (IFDGG) each bind FAD. D399 functions as the Proton acceptor in the catalytic mechanism.

Belongs to the acyl-CoA dehydrogenase family. In terms of assembly, homotetramer. Requires FAD as cofactor.

The catalysed reaction is a primary nitroalkane + O2 + H2O = an aldehyde + nitrite + H2O2 + H(+). The enzyme catalyses a secondary nitroalkane + O2 + H2O = a ketone + nitrite + H2O2 + H(+). Nitroalkane oxidase (NAO) catalyzes the oxidation of nitroalkanes to the corresponding aldehydes or ketones with the release of nitrite and the consumption of molecular oxygen to yield hydrogen peroxide. NAO is unusual, since it catalyzes substrate oxidation by removing a substrate proton to form a carbanion intermediate. Prefers longer nitroalkanes, with 1-nitrohexane having the highest activity. The chain is Nitroalkane oxidase from Podospora anserina (strain S / ATCC MYA-4624 / DSM 980 / FGSC 10383) (Pleurage anserina).